The primary structure comprises 225 residues: Uracil-DNA glycosylase (225 aa).

Residue D68 is the Proton acceptor of the active site.

This sequence belongs to the uracil-DNA glycosylase (UDG) superfamily. UNG family.

The protein resides in the cytoplasm. The enzyme catalyses Hydrolyzes single-stranded DNA or mismatched double-stranded DNA and polynucleotides, releasing free uracil.. Its function is as follows. Excises uracil residues from the DNA which can arise as a result of misincorporation of dUMP residues by DNA polymerase or due to deamination of cytosine. The chain is Uracil-DNA glycosylase from Mycolicibacterium gilvum (strain PYR-GCK) (Mycobacterium gilvum (strain PYR-GCK)).